We begin with the raw amino-acid sequence, 206 residues long: MNILQIDSSVLGDNSVSRSLTASVVADLVAATPDAKVTVRDLDQDAPAHLSGNLLPVLGGPKEGLSAIQEAELQRTEQWLAEFLAADVLVVGVPQYNFSIPSQLKAWIDRIAQAGRTFKYTENGPVGLAGGKRVIVVSSRGGVRQDANELDLHEKTVDIVFRFLGITDITYVRAHGLAMGPQFREAGLASARTEIAALNDASRLAA.

Residues Ser-9, Ser-15 to Ser-17, and Ser-139 to Gly-142 contribute to the FMN site.

Belongs to the azoreductase type 1 family. In terms of assembly, homodimer. The cofactor is FMN.

The catalysed reaction is 2 a quinone + NADH + H(+) = 2 a 1,4-benzosemiquinone + NAD(+). The enzyme catalyses N,N-dimethyl-1,4-phenylenediamine + anthranilate + 2 NAD(+) = 2-(4-dimethylaminophenyl)diazenylbenzoate + 2 NADH + 2 H(+). Its function is as follows. Quinone reductase that provides resistance to thiol-specific stress caused by electrophilic quinones. Also exhibits azoreductase activity. Catalyzes the reductive cleavage of the azo bond in aromatic azo compounds to the corresponding amines. This Cupriavidus necator (strain ATCC 17699 / DSM 428 / KCTC 22496 / NCIMB 10442 / H16 / Stanier 337) (Ralstonia eutropha) protein is FMN-dependent NADH:quinone oxidoreductase.